The following is a 78-amino-acid chain: MSRVCQVTGKKPMVGNNRSHAKNSTRRRFLPNLQNHRFWLEEEKRFVQLRVSTKGIRIIDKKGIEVIVKELRARGEKV.

The disordered stretch occupies residues 1 to 23; the sequence is MSRVCQVTGKKPMVGNNRSHAKN.

Belongs to the bacterial ribosomal protein bL28 family.

This chain is Large ribosomal subunit protein bL28, found in Shewanella frigidimarina (strain NCIMB 400).